The sequence spans 427 residues: GTPase Obg (427 aa).

The region spanning 1–158 (MFVDIAKIYV…LWVILELKVL (158 aa)) is the Obg domain. The OBG-type G domain maps to 159-330 (ADVGLIGYPN…VLKRAYELLK (172 aa)). Residues 165–172 (GYPNVGKS), 190–194 (FTTKY), 212–215 (DIPG), 282–285 (NKMD), and 311–313 (SAA) contribute to the GTP site. Residues Ser-172 and Thr-192 each contribute to the Mg(2+) site. One can recognise an OCT domain in the interval 347 to 427 (FVYYKKKDVK…ILDVEFEYYE (81 aa)).

Belongs to the TRAFAC class OBG-HflX-like GTPase superfamily. OBG GTPase family. As to quaternary structure, monomer. Mg(2+) is required as a cofactor.

The protein resides in the cytoplasm. An essential GTPase which binds GTP, GDP and possibly (p)ppGpp with moderate affinity, with high nucleotide exchange rates and a fairly low GTP hydrolysis rate. Plays a role in control of the cell cycle, stress response, ribosome biogenesis and in those bacteria that undergo differentiation, in morphogenesis control. This chain is GTPase Obg, found in Caldicellulosiruptor bescii (strain ATCC BAA-1888 / DSM 6725 / KCTC 15123 / Z-1320) (Anaerocellum thermophilum).